A 129-amino-acid polypeptide reads, in one-letter code: ATP synthase epsilon chain (129 aa).

Belongs to the ATPase epsilon chain family. As to quaternary structure, F-type ATPases have 2 components, CF(1) - the catalytic core - and CF(0) - the membrane proton channel. CF(1) has five subunits: alpha(3), beta(3), gamma(1), delta(1), epsilon(1). CF(0) has three main subunits: a, b and c.

The protein localises to the cell inner membrane. Functionally, produces ATP from ADP in the presence of a proton gradient across the membrane. The polypeptide is ATP synthase epsilon chain (Campylobacter jejuni subsp. jejuni serotype O:2 (strain ATCC 700819 / NCTC 11168)).